The primary structure comprises 695 residues: U1 snRNP-associated protein usp107 (695 aa).

The segment covering 85-96 (RDNESQQKDRKN) has biased composition (basic and acidic residues). Residues 85–134 (RDNESQQKDRKNLPRNQKSNEIQEKQTFQTPSSEKSTTERESRPFVPPNS) are disordered. Residues 98–113 (PRNQKSNEIQEKQTFQ) show a composition bias toward polar residues. Residues 139-221 (RMLFIGNIPK…PSTRLSLITD (83 aa)) form the RRM domain. Residues 265 to 369 (DVRSRIERAA…NLLSKHRISR (105 aa)) adopt a coiled-coil conformation. Composition is skewed to basic and acidic residues over residues 487 to 506 (EEDA…RTRG) and 548 to 561 (SERR…RLLL). 2 disordered regions span residues 487–509 (EEDA…GEGA) and 540–590 (QTKK…AEKT). The region spanning 605 to 695 (ESLWALPIDW…HVLLILRSEA (91 aa)) is the PWI domain.

In terms of assembly, component of the U1 snRNP particle, a subcomplex of the spliceosome. Interacts with prp5 and usp102.

Its subcellular location is the cytoplasm. The protein localises to the nucleus. Its function is as follows. Component of the U1 snRNP particle, which recognizes and binds the 5'-splice site of pre-mRNA. Together with other non-snRNP factors, U1 snRNP forms the spliceosomal commitment complex, that targets pre-mRNA to the splicing pathway. This is U1 snRNP-associated protein usp107 (usp107) from Schizosaccharomyces pombe (strain 972 / ATCC 24843) (Fission yeast).